A 788-amino-acid polypeptide reads, in one-letter code: Protein translocase subunit SecA 2 (788 aa).

ATP contacts are provided by residues Gln86, 104-108 (GEGKT), and Asp493.

Belongs to the SecA family. In terms of assembly, monomer and homodimer. Part of the essential Sec protein translocation apparatus which comprises SecA, SecYEG and auxiliary proteins SecDF. Other proteins may also be involved.

The protein resides in the cell membrane. It localises to the cytoplasm. The catalysed reaction is ATP + H2O + cellular proteinSide 1 = ADP + phosphate + cellular proteinSide 2.. Functionally, part of the Sec protein translocase complex. Interacts with the SecYEG preprotein conducting channel. Has a central role in coupling the hydrolysis of ATP to the transfer of proteins into and across the cell membrane, serving as an ATP-driven molecular motor driving the stepwise translocation of polypeptide chains across the membrane. In Bacillus cereus (strain ZK / E33L), this protein is Protein translocase subunit SecA 2.